The chain runs to 392 residues: Queuine tRNA-ribosyltransferase (392 aa).

Residue Asp92 is the Proton acceptor of the active site. Substrate is bound by residues 92–96 (DSGGF), Asp146, Gln188, and Gly215. Residues 246 to 252 (GVGSPED) are RNA binding. Residue Asp265 is the Nucleophile of the active site. The tract at residues 270 to 274 (TRLGR) is RNA binding; important for wobble base 34 recognition. Zn(2+) is bound by residues Cys303, Cys305, Cys308, and His334.

It belongs to the queuine tRNA-ribosyltransferase family. As to quaternary structure, homodimer. Within each dimer, one monomer is responsible for RNA recognition and catalysis, while the other monomer binds to the replacement base PreQ1. Zn(2+) is required as a cofactor.

The catalysed reaction is 7-aminomethyl-7-carbaguanine + guanosine(34) in tRNA = 7-aminomethyl-7-carbaguanosine(34) in tRNA + guanine. The protein operates within tRNA modification; tRNA-queuosine biosynthesis. Catalyzes the base-exchange of a guanine (G) residue with the queuine precursor 7-aminomethyl-7-deazaguanine (PreQ1) at position 34 (anticodon wobble position) in tRNAs with GU(N) anticodons (tRNA-Asp, -Asn, -His and -Tyr). Catalysis occurs through a double-displacement mechanism. The nucleophile active site attacks the C1' of nucleotide 34 to detach the guanine base from the RNA, forming a covalent enzyme-RNA intermediate. The proton acceptor active site deprotonates the incoming PreQ1, allowing a nucleophilic attack on the C1' of the ribose to form the product. After dissociation, two additional enzymatic reactions on the tRNA convert PreQ1 to queuine (Q), resulting in the hypermodified nucleoside queuosine (7-(((4,5-cis-dihydroxy-2-cyclopenten-1-yl)amino)methyl)-7-deazaguanosine). The chain is Queuine tRNA-ribosyltransferase from Herpetosiphon aurantiacus (strain ATCC 23779 / DSM 785 / 114-95).